The chain runs to 316 residues: 4-hydroxy-3-methylbut-2-enyl diphosphate reductase (316 aa).

Cysteine 12 serves as a coordination point for [4Fe-4S] cluster. (2E)-4-hydroxy-3-methylbut-2-enyl diphosphate contacts are provided by histidine 41 and histidine 74. Residues histidine 41 and histidine 74 each coordinate dimethylallyl diphosphate. Isopentenyl diphosphate is bound by residues histidine 41 and histidine 74. Cysteine 96 lines the [4Fe-4S] cluster pocket. Histidine 124 contributes to the (2E)-4-hydroxy-3-methylbut-2-enyl diphosphate binding site. Residue histidine 124 coordinates dimethylallyl diphosphate. Residue histidine 124 coordinates isopentenyl diphosphate. Residue glutamate 126 is the Proton donor of the active site. Threonine 169 contacts (2E)-4-hydroxy-3-methylbut-2-enyl diphosphate. Cysteine 199 contacts [4Fe-4S] cluster. Serine 227, serine 228, asparagine 229, and serine 271 together coordinate (2E)-4-hydroxy-3-methylbut-2-enyl diphosphate. Positions 227, 228, 229, and 271 each coordinate dimethylallyl diphosphate. Isopentenyl diphosphate contacts are provided by serine 227, serine 228, asparagine 229, and serine 271.

The protein belongs to the IspH family. [4Fe-4S] cluster is required as a cofactor.

The catalysed reaction is isopentenyl diphosphate + 2 oxidized [2Fe-2S]-[ferredoxin] + H2O = (2E)-4-hydroxy-3-methylbut-2-enyl diphosphate + 2 reduced [2Fe-2S]-[ferredoxin] + 2 H(+). It catalyses the reaction dimethylallyl diphosphate + 2 oxidized [2Fe-2S]-[ferredoxin] + H2O = (2E)-4-hydroxy-3-methylbut-2-enyl diphosphate + 2 reduced [2Fe-2S]-[ferredoxin] + 2 H(+). It participates in isoprenoid biosynthesis; dimethylallyl diphosphate biosynthesis; dimethylallyl diphosphate from (2E)-4-hydroxy-3-methylbutenyl diphosphate: step 1/1. The protein operates within isoprenoid biosynthesis; isopentenyl diphosphate biosynthesis via DXP pathway; isopentenyl diphosphate from 1-deoxy-D-xylulose 5-phosphate: step 6/6. In terms of biological role, catalyzes the conversion of 1-hydroxy-2-methyl-2-(E)-butenyl 4-diphosphate (HMBPP) into a mixture of isopentenyl diphosphate (IPP) and dimethylallyl diphosphate (DMAPP). Acts in the terminal step of the DOXP/MEP pathway for isoprenoid precursor biosynthesis. This Vibrio cholerae serotype O1 (strain ATCC 39315 / El Tor Inaba N16961) protein is 4-hydroxy-3-methylbut-2-enyl diphosphate reductase.